The primary structure comprises 180 residues: Large ribosomal subunit protein uL5 (180 aa).

This sequence belongs to the universal ribosomal protein uL5 family. Part of the 50S ribosomal subunit; part of the 5S rRNA/L5/L18/L25 subcomplex. Contacts the 5S rRNA and the P site tRNA. Forms a bridge to the 30S subunit in the 70S ribosome.

This is one of the proteins that bind and probably mediate the attachment of the 5S RNA into the large ribosomal subunit, where it forms part of the central protuberance. In the 70S ribosome it contacts protein S13 of the 30S subunit (bridge B1b), connecting the 2 subunits; this bridge is implicated in subunit movement. Contacts the P site tRNA; the 5S rRNA and some of its associated proteins might help stabilize positioning of ribosome-bound tRNAs. The sequence is that of Large ribosomal subunit protein uL5 from Mycoplasma mycoides subsp. mycoides SC (strain CCUG 32753 / NCTC 10114 / PG1).